A 284-amino-acid chain; its full sequence is Small ribosomal subunit protein uS5z (284 aa).

Positions 1–19 (MAERGGEGGAERGGDRGDF) are enriched in basic and acidic residues. The tract at residues 1–51 (MAERGGEGGAERGGDRGDFGRGFGGGRGGGRGRDRGPRGRGRRGGRASEET) is disordered. Residues 20–29 (GRGFGGGRGG) show a composition bias toward gly residues. The S5 DRBM domain maps to 95–158 (LKDEVMKIMP…ILAKLSVVPV (64 aa)).

Belongs to the universal ribosomal protein uS5 family.

The chain is Small ribosomal subunit protein uS5z (RPS2A) from Arabidopsis thaliana (Mouse-ear cress).